A 241-amino-acid chain; its full sequence is MNYKISIRYDGSLFYGWAKQPQKRTVQEHLETVFKTIFKINDIKIIGSGRTDRGVHAYEQVFSVNHHQLNYEPQVIYQALCSQIDPDVQILKVQSVHDTFHAQHDAISKTYQYIINDYEFDLFKHNYEYFIHQKINDQKLLEALELFVGEYDFKSFSTSELPLTTRKINWVKITRNTRLEIYINGNGFLKNMVRMIISACIDYVFNKISLTQIKTLLTNPKKGASVKLAPPCGLYLYKVYY.

Asp-52 serves as the catalytic Nucleophile. Tyr-111 contacts substrate.

Belongs to the tRNA pseudouridine synthase TruA family. Homodimer.

It carries out the reaction uridine(38/39/40) in tRNA = pseudouridine(38/39/40) in tRNA. Formation of pseudouridine at positions 38, 39 and 40 in the anticodon stem and loop of transfer RNAs. The polypeptide is tRNA pseudouridine synthase A (Ureaplasma urealyticum serovar 10 (strain ATCC 33699 / Western)).